Reading from the N-terminus, the 513-residue chain is Sulfhydryl oxidase 1 (513 aa).

Positions 1-30 (MAAAAVARRVVLVLVLAAASLAAAPRGAAA) are cleaved as a signal peptide. Residues 31 to 174 (RSLGGREGPG…LLKWINNQMK (144 aa)) form the Thioredoxin domain. A glycan (N-linked (GlcNAc...) asparagine) is linked at Asn51. Active-site nucleophile residues include Cys76 and Cys79. A disulfide bridge connects residues Cys76 and Cys79. N-linked (GlcNAc...) asparagine glycans are attached at residues Asn193 and Asn266. Cys301 and Cys313 are disulfide-bonded. In terms of domain architecture, ERV/ALR sulfhydryl oxidase spans 304 to 406 (SKSETRGFSC…GDPLFPKVTW (103 aa)). FAD-binding positions include Arg309, Trp316, His320, Glu350, His354, 377–384 (WSTHNKVN), Lys403, and Trp406. A disulfide bond links Cys348 and Cys351. An intrachain disulfide couples Cys412 to Cys415.

FAD serves as cofactor.

Its subcellular location is the secreted. It carries out the reaction 2 R'C(R)SH + O2 = R'C(R)S-S(R)CR' + H2O2. Its function is as follows. Catalyzes the oxidation of sulfhydryl groups in peptide and protein thiols to disulfides with the reduction of oxygen to hydrogen peroxide. May contribute to disulfide bond formation in a variety of secreted proteins. In Oryza sativa subsp. japonica (Rice), this protein is Sulfhydryl oxidase 1 (QSOX1).